The sequence spans 855 residues: Pre-mRNA-splicing factor SYF1 (855 aa).

HAT repeat units follow at residues 15-47 (LVFEEEDLPYEEEIMRNQFSVKCWLRYIEFKQG), 48-80 (APKPRLNQLYERALKLLPCSYKLWYRYLKARRA), 90-122 (PAYEDVNNCHERAFVFMHKMPRLWLDYCQFLMD), 124-158 (GRVTHTRRTFDRALRALPITQHSRIWPLYLRFLRS), 160-192 (PLPETAVRGYRRFLKLSPESAEEYIEYLKSSDR), 198-230 (QRLATVVNDERFVSKAGKSNYQLWHELCDLISQ), 235-268 (VQSLNVDAIIRGGLTRFTDQLGKLWCSLADYYIR), 270-305 (GHFEKARDVYEEAIRTVMTVRDFTQVFDSYAQFEES), and 369-407 (GRPREIINTYTEAVQTVDPFKATGKPHTLWVAFAKFYED). Residue K420 is modified to N6-acetyllysine. HAT repeat units follow at residues 498-530 (GTFQSTKAVYDRILDLRIATPQIVINYAMFLEE), 532-566 (KYFEESFKAYERGISLFKWPNVSDIWSTYLTKFIS), 571-605 (RKLERARDLFEQALDGCPPKYAKTLYLLYAQLEEE), 643-677 (YGVTHTRGIYQKAIEVLSDEHAREMCLRFADMECK), and 679-713 (GEIDRARAIYSFCSQICDPRTTGAFWQTWKDFEVR). Positions 808–855 (AELAQQANPEEIQLGEDEDEDEMDLEPNEVRLEQQSVPAAVFGSLKED) are disordered. The segment covering 820-834 (QLGEDEDEDEMDLEP) has biased composition (acidic residues). S851 carries the post-translational modification Phosphoserine.

It belongs to the crooked-neck family. In terms of assembly, associates with RNA polymerase II, the TCR-specific proteins CKN1/CSA and ERCC6/CSB, and XPA. Identified in the spliceosome C complex. Component of the XAB2 complex, a multimeric protein complex composed of XAB2, PRPF19, AQR, ZNF830, ISY1, and PPIE. Identified in a pentameric intron-binding (IB) complex composed of AQR, XAB2, ISY1, ZNF830 and PPIE that is incorporated into the spliceosome as a preassembled complex. The IB complex does not contain PRPF19.

The protein localises to the nucleus. Its function is as follows. Involved in pre-mRNA splicing as component of the spliceosome. Involved in transcription-coupled repair (TCR), transcription and pre-mRNA splicing. In Rattus norvegicus (Rat), this protein is Pre-mRNA-splicing factor SYF1 (Xab2).